We begin with the raw amino-acid sequence, 159 residues long: MSGLTHFDESGSAHMVDVSEKPVTARVAVARGAVKMSAETLALVTEGRAEKGDVLGVARLAGIMGAKRTADLIPLCHPLPITKVALELTADPALPGVVVEATVKTGGQTGVEMEALTAVSVACLTIYDMVKAVEKGMEITGIRLLLKEGGKSGRFEASA.

Substrate-binding positions include 75–77 (LCH) and 113–114 (ME). The active site involves Asp-128.

It belongs to the MoaC family. Homohexamer; trimer of dimers.

The catalysed reaction is (8S)-3',8-cyclo-7,8-dihydroguanosine 5'-triphosphate = cyclic pyranopterin phosphate + diphosphate. It participates in cofactor biosynthesis; molybdopterin biosynthesis. Catalyzes the conversion of (8S)-3',8-cyclo-7,8-dihydroguanosine 5'-triphosphate to cyclic pyranopterin monophosphate (cPMP). This chain is Cyclic pyranopterin monophosphate synthase, found in Cereibacter sphaeroides (strain ATCC 17029 / ATH 2.4.9) (Rhodobacter sphaeroides).